The sequence spans 263 residues: MLTITAIKAFNDNYIWVLQQQPHTQVYVVDPGDASVVIDYLEANKLTLAGILLTHHHNDHTGGVAELQAYSQNRLSVYGPDNEKIEGITHPLHATAQPRFILDYMSGELQVLDVPGHTAGHIAYVIADALFCGDTLFSGGCGRLFEGTPAQMLNSLQQLAQLPADTRVYCAHEYTLSNLKFALAVNPNNRALQDYNERAIALRRQEKATIPSTIALERAINPFLRASDTEIVDSIKQHFSDLNHANLDELGGFTLLRQWKDNF.

Residues His-55, His-57, Asp-59, His-60, His-117, Asp-134, and His-172 each contribute to the Zn(2+) site.

The protein belongs to the metallo-beta-lactamase superfamily. Glyoxalase II family. In terms of assembly, monomer. It depends on Zn(2+) as a cofactor.

It catalyses the reaction an S-(2-hydroxyacyl)glutathione + H2O = a 2-hydroxy carboxylate + glutathione + H(+). Its pathway is secondary metabolite metabolism; methylglyoxal degradation; (R)-lactate from methylglyoxal: step 2/2. Thiolesterase that catalyzes the hydrolysis of S-D-lactoyl-glutathione to form glutathione and D-lactic acid. The protein is Hydroxyacylglutathione hydrolase of Shewanella baltica (strain OS185).